The chain runs to 185 residues: Ribosome-recycling factor (185 aa).

It belongs to the RRF family.

It localises to the cytoplasm. Its function is as follows. Responsible for the release of ribosomes from messenger RNA at the termination of protein biosynthesis. May increase the efficiency of translation by recycling ribosomes from one round of translation to another. In Alkalilimnicola ehrlichii (strain ATCC BAA-1101 / DSM 17681 / MLHE-1), this protein is Ribosome-recycling factor.